Here is a 201-residue protein sequence, read N- to C-terminus: Small ribosomal subunit protein uS4 (201 aa).

The tract at residues 26-46 (LARRAYAPGDHGRDRRGKLSE) is disordered. The segment covering 35-44 (DHGRDRRGKL) has biased composition (basic and acidic residues). Residues 93–156 (RRLDNMVYRL…KNLDIIKNAV (64 aa)) enclose the S4 RNA-binding domain.

Belongs to the universal ribosomal protein uS4 family. As to quaternary structure, part of the 30S ribosomal subunit. Contacts protein S5. The interaction surface between S4 and S5 is involved in control of translational fidelity.

In terms of biological role, one of the primary rRNA binding proteins, it binds directly to 16S rRNA where it nucleates assembly of the body of the 30S subunit. Functionally, with S5 and S12 plays an important role in translational accuracy. The protein is Small ribosomal subunit protein uS4 of Limosilactobacillus reuteri (strain DSM 20016) (Lactobacillus reuteri).